We begin with the raw amino-acid sequence, 89 residues long: MSITVEEKARLIKEYATKEGDTGSPEVQVAVLSSRIATLTEHFKAHKKDNHSRRGLLMMVAQRRKLLDYLKKKDEGRYTALIARLGLRR.

The protein belongs to the universal ribosomal protein uS15 family. Part of the 30S ribosomal subunit. Forms a bridge to the 50S subunit in the 70S ribosome, contacting the 23S rRNA.

Its function is as follows. One of the primary rRNA binding proteins, it binds directly to 16S rRNA where it helps nucleate assembly of the platform of the 30S subunit by binding and bridging several RNA helices of the 16S rRNA. In terms of biological role, forms an intersubunit bridge (bridge B4) with the 23S rRNA of the 50S subunit in the ribosome. The protein is Small ribosomal subunit protein uS15 of Cereibacter sphaeroides (strain ATCC 17023 / DSM 158 / JCM 6121 / CCUG 31486 / LMG 2827 / NBRC 12203 / NCIMB 8253 / ATH 2.4.1.) (Rhodobacter sphaeroides).